Consider the following 503-residue polypeptide: Alpha-1,3/1,6-mannosyltransferase ALG2 (503 aa).

N-linked (GlcNAc...) asparagine glycans are attached at residues Asn-59, Asn-173, Asn-262, and Asn-403. Transmembrane regions (helical) follow at residues 444-466 (LWSTLAPGLLMFTVQYATLLITG) and 473-495 (LLLAAISYFVLRSVKATVYWIIV). Asn-500 carries N-linked (GlcNAc...) asparagine glycosylation.

This sequence belongs to the glycosyltransferase group 1 family.

It is found in the endoplasmic reticulum membrane. It catalyses the reaction a beta-D-Man-(1-&gt;4)-beta-D-GlcNAc-(1-&gt;4)-alpha-D-GlcNAc-diphospho-di-trans,poly-cis-dolichol + GDP-alpha-D-mannose = an alpha-D-Man-(1-&gt;3)-beta-D-Man-(1-&gt;4)-beta-D-GlcNAc-(1-&gt;4)-alpha-D-GlcNAc-diphospho-di-trans,poly-cis-dolichol + GDP + H(+). It carries out the reaction an alpha-D-Man-(1-&gt;3)-beta-D-Man-(1-&gt;4)-beta-D-GlcNAc-(1-&gt;4)-alpha-D-GlcNAc-diphospho-di-trans,poly-cis-dolichol + GDP-alpha-D-mannose = an alpha-D-Man-(1-&gt;3)-[alpha-D-Man-(1-&gt;6)]-beta-D-Man-(1-&gt;4)-beta-D-GlcNAc-(1-&gt;4)-alpha-D-GlcNAc-diphospho-di-trans,poly-cis-dolichol + GDP + H(+). The protein operates within protein modification; protein glycosylation. Its function is as follows. Mannosylates Man(2)GlcNAc(2)-dolichol diphosphate and Man(1)GlcNAc(2)-dolichol diphosphate to form Man(3)GlcNAc(2)-dolichol diphosphate. The polypeptide is Alpha-1,3/1,6-mannosyltransferase ALG2 (ALG2) (Kluyveromyces lactis (strain ATCC 8585 / CBS 2359 / DSM 70799 / NBRC 1267 / NRRL Y-1140 / WM37) (Yeast)).